Reading from the N-terminus, the 1622-residue chain is Transient receptor potential cation channel subfamily M member 1 (1622 aa).

Disordered regions lie at residues Met1–Lys25, Pro64–Gln95, Leu450–Glu490, Leu618–Ile641, and Ser822–Gln856. At Met1–Lys875 the chain is on the cytoplasmic side. Residues Ser8 to Lys25 show a composition bias toward low complexity. A compositionally biased stretch (polar residues) spans Ala70 to Gln95. Basic residues predominate over residues Gly472 to Lys483. 2 stretches are compositionally biased toward basic and acidic residues: residues Lys823–Glu832 and Gly843–His853. A helical membrane pass occupies residues Phe876–Val896. Topologically, residues Arg897–Glu942 are extracellular. A helical membrane pass occupies residues Tyr943–Leu963. The Cytoplasmic portion of the chain corresponds to Gln964 to Arg973. The helical transmembrane segment at Val974–Asn994 threads the bilayer. Residues Lys995 to Lys1006 lie on the Extracellular side of the membrane. Residues Met1007–Val1027 traverse the membrane as a helical segment. The Cytoplasmic segment spans residues Ala1028–Ala1099. A helical transmembrane segment spans residues Leu1100–Phe1120. The N-linked (GlcNAc...) asparagine glycan is linked to Asn1121. Residues Asn1121–Pro1150 lie on the Extracellular side of the membrane. Residues Val1151–Gly1171 traverse the membrane as a helical segment. Topologically, residues Arg1172–Cys1622 are cytoplasmic. Residues Asp1224–Lys1252 adopt a coiled-coil conformation. Disordered stretches follow at residues Glu1354–Leu1383, Leu1389–Pro1408, and Cys1567–Cys1622. Residues Gln1613–Cys1622 are compositionally biased toward basic and acidic residues.

The protein belongs to the transient receptor (TC 1.A.4) family. LTrpC subfamily. TRPM1 sub-subfamily. Homodimer. Interacts with TRPM3; the interaction results in the formation of a heteromultimeric cation channel complex that are functionally different from the homomeric channels. Interacts with GPR179. Associates with both guanine nucleotide-binding proteins G(o) and beta-gamma G protein dimer; implicated in directly regulating TRPM1 channel open-state. As to expression, expressed in the retina where it localizes on dendritic tips of ON bipolar cells. Specifically, it is expressed in retinal bipolar cells (BPCs) of the ON subtype. Not detected in brain, lung, liver, heart, kidney, spleen or small intestine. Also expressed at high levels in poorly metastatic variants of B16 melanoma and at much reduced levels in highly metastatic variants of B16 melanoma.

It localises to the cell membrane. Its subcellular location is the endoplasmic reticulum membrane. The protein localises to the cell projection. It is found in the axon. The catalysed reaction is Ca(2+)(in) = Ca(2+)(out). It carries out the reaction Mg(2+)(in) = Mg(2+)(out). It catalyses the reaction Mn(2+)(in) = Mn(2+)(out). The enzyme catalyses Ni(2+)(in) = Ni(2+)(out). Its activity is regulated as follows. Inhibited by extracellular zinc ions. Inhibited by intracellular Mg(2+). Activated by the neuroactive steroid pregnenolone sulfate. Negatively regulated by activation of GRM6 receptors in the ON-bipolar cells. In terms of biological role, constitutively open nonselective divalent cation-conducting channels which mediate the influx of Ca(2+), Mg(2+), Mn(2+), Ba(2+), and Ni(2+) into the cytoplasm, leading to membrane depolarization. Impermeable to zinc ions. In addition, forms heteromultimeric ion channels with TRPM3 which are permeable for calcium and zinc ions. Plays an essential role for the depolarizing photoresponse of retinal ON bipolar cells. In the dark, tonic release of glutamate activates the G-protein coupled receptor for glutamate (GRM6), its activation induces the release of G(o) and the beta-gamma G protein dimer. Both subunits can interact and inactivate the TRPM1 channel. A light onset, induces decrease in glutamate release and deactivation of GRM6 leading to channel opening and membrane depolarization. May play a role in metastasis suppression. The protein is Transient receptor potential cation channel subfamily M member 1 of Mus musculus (Mouse).